A 343-amino-acid polypeptide reads, in one-letter code: N-acetyl-gamma-glutamyl-phosphate reductase (343 aa).

Residue cysteine 147 is part of the active site.

The protein belongs to the NAGSA dehydrogenase family. Type 1 subfamily.

It is found in the cytoplasm. The enzyme catalyses N-acetyl-L-glutamate 5-semialdehyde + phosphate + NADP(+) = N-acetyl-L-glutamyl 5-phosphate + NADPH + H(+). It participates in amino-acid biosynthesis; L-arginine biosynthesis; N(2)-acetyl-L-ornithine from L-glutamate: step 3/4. Its function is as follows. Catalyzes the NADPH-dependent reduction of N-acetyl-5-glutamyl phosphate to yield N-acetyl-L-glutamate 5-semialdehyde. This is N-acetyl-gamma-glutamyl-phosphate reductase from Staphylococcus saprophyticus subsp. saprophyticus (strain ATCC 15305 / DSM 20229 / NCIMB 8711 / NCTC 7292 / S-41).